The sequence spans 457 residues: Cysteine--tRNA ligase (457 aa).

C28 lines the Zn(2+) pocket. Positions 30 to 40 match the 'HIGH' region motif; sequence MTVYDLCHIGH. Zn(2+) contacts are provided by C209, H234, and E238. Residues 266-270 carry the 'KMSKS' region motif; the sequence is KMSKS. Residue K269 participates in ATP binding.

The protein belongs to the class-I aminoacyl-tRNA synthetase family. In terms of assembly, monomer. It depends on Zn(2+) as a cofactor.

It localises to the cytoplasm. The enzyme catalyses tRNA(Cys) + L-cysteine + ATP = L-cysteinyl-tRNA(Cys) + AMP + diphosphate. The sequence is that of Cysteine--tRNA ligase from Chromobacterium violaceum (strain ATCC 12472 / DSM 30191 / JCM 1249 / CCUG 213 / NBRC 12614 / NCIMB 9131 / NCTC 9757 / MK).